The sequence spans 917 residues: Glutamate receptor (917 aa).

The first 19 residues, 1–19 (MDTCVFPLVVLWISMRITS), serve as a signal peptide directing secretion. Residues 20 to 556 (TLDEVPIGGI…HFFSFMEPLS (537 aa)) are Extracellular-facing. 12 N-linked (GlcNAc...) asparagine glycosylation sites follow: N62, N95, N121, N125, N229, N251, N261, N272, N418, N419, N424, and N491. The chain crosses the membrane as a helical span at residues 557 to 577 (SEIWMCIVFAYIGVSVVLFLV). The Cytoplasmic segment spans residues 578–631 (SRFSPNEWHLSEAHHSYIANDFSISNSLWFSLGAFMQQGCDISPRSMSGRIVGS). A helical transmembrane segment spans residues 632 to 652 (VWWFFTLIIISSYTANLAAFL). The Extracellular segment spans residues 653–818 (TVERMLTPID…GAQSALTLAN (166 aa)). N-linked (GlcNAc...) asparagine glycosylation is present at N775. A helical membrane pass occupies residues 819–839 (VAGIFYILIGGLVVAVLSAAF). The Cytoplasmic portion of the chain corresponds to 840–917 (EFLYKSRMDS…FEDSNTHTEV (78 aa)). Positions 871–896 (HIDSEQKTTGNGTRRRSHNSVTYTYT) are disordered.

Belongs to the glutamate-gated ion channel (TC 1.A.10.1) family.

It is found in the cell membrane. Its subcellular location is the postsynaptic cell membrane. Its function is as follows. Receptor for glutamate. L-glutamate acts as an excitatory neurotransmitter at many synapses in the central nervous system. The postsynaptic actions of Glu are mediated by a variety of receptors. The polypeptide is Glutamate receptor (Lymnaea stagnalis (Great pond snail)).